The primary structure comprises 447 residues: Serine/threonine-protein phosphatase 2A 55 kDa regulatory subunit B gamma isoform (447 aa).

7 WD repeats span residues 22–61, 87–128, 171–209, 220–260, 279–317, 334–375, and 410–446; these read TEADVISTVEFNHTGELLATGDKGGRVVIFQREPESKNAP, EIEE…KRPE, GHTYHINSISVNSDCETYMSADDLRINLWHLAITDRSFN, DLTE…LCDK, EIISSVSDVKFSHSGRYMLTRDYLTVKVWDLNMEARPIE, ESDC…DVTL, and DFTKKILHTAWHPAENIIAIAATNNLYIFQDKVNSDM.

This sequence belongs to the phosphatase 2A regulatory subunit B family. PP2A consists of a common heterodimeric core enzyme, composed of a 36 kDa catalytic subunit (subunit C) and a 65 kDa constant regulatory subunit (PR65 or subunit A), that associates with a variety of regulatory subunits. Proteins that associate with the core dimer include three families of regulatory subunits B (the R2/B/PR55/B55, R3/B''/PR72/PR130/PR59 and R5/B'/B56 families), the 48 kDa variable regulatory subunit, viral proteins, and cell signaling molecules. Interacts with IER5. In terms of tissue distribution, highly expressed in brain.

The B regulatory subunit might modulate substrate selectivity and catalytic activity, and might also direct the localization of the catalytic enzyme to a particular subcellular compartment. The protein is Serine/threonine-protein phosphatase 2A 55 kDa regulatory subunit B gamma isoform (Ppp2r2c) of Rattus norvegicus (Rat).